A 403-amino-acid chain; its full sequence is Formate-dependent phosphoribosylglycinamide formyltransferase (403 aa).

N(1)-(5-phospho-beta-D-ribosyl)glycinamide-binding positions include 27–28 and E87; that span reads EL. Residues R120, K161, 166-171, 201-204, and E209 contribute to the ATP site; these read SSGKGQ and EGFV. The 195-residue stretch at 125–319 folds into the ATP-grasp domain; it reads RLAAEELGLP…EFELHARAIL (195 aa). The Mg(2+) site is built by E278 and E290. Residues D297, K366, and 373 to 374 contribute to the N(1)-(5-phospho-beta-D-ribosyl)glycinamide site; that span reads RR. The tract at residues 382 to 403 is disordered; that stretch reads GPDVETARSRAREAASRVEPVA. The segment covering 386-397 has biased composition (basic and acidic residues); it reads ETARSRAREAAS.

It belongs to the PurK/PurT family. As to quaternary structure, homodimer.

The catalysed reaction is N(1)-(5-phospho-beta-D-ribosyl)glycinamide + formate + ATP = N(2)-formyl-N(1)-(5-phospho-beta-D-ribosyl)glycinamide + ADP + phosphate + H(+). The protein operates within purine metabolism; IMP biosynthesis via de novo pathway; N(2)-formyl-N(1)-(5-phospho-D-ribosyl)glycinamide from N(1)-(5-phospho-D-ribosyl)glycinamide (formate route): step 1/1. In terms of biological role, involved in the de novo purine biosynthesis. Catalyzes the transfer of formate to 5-phospho-ribosyl-glycinamide (GAR), producing 5-phospho-ribosyl-N-formylglycinamide (FGAR). Formate is provided by PurU via hydrolysis of 10-formyl-tetrahydrofolate. In Rhodococcus jostii (strain RHA1), this protein is Formate-dependent phosphoribosylglycinamide formyltransferase.